Consider the following 225-residue polypeptide: UPF0758 protein NMCC_1157 (225 aa).

One can recognise an MPN domain in the interval 102-224 (VLSDPDTVAD…VRSFRQLGLM (123 aa)). Zn(2+) contacts are provided by histidine 173, histidine 175, and aspartate 186. Positions 173 to 186 (HNHPGGSPEPSQED) match the JAMM motif motif.

This sequence belongs to the UPF0758 family.

The sequence is that of UPF0758 protein NMCC_1157 from Neisseria meningitidis serogroup C (strain 053442).